A 100-amino-acid polypeptide reads, in one-letter code: Protein SAMBA (100 aa).

The interval 1–40 is disordered; it reads MNGASPAHSLVSTTAVAGGGGSSGAAAGLDDFHFPPDIPS.

Interacts with CDC27B and CYCA2-3. As to expression, expressed in embryos, germinating seeds, hypocotyls and pollen grains.

Its function is as follows. Plays an important role in organ size control. Acts as negative regulator of the anaphase-promoting complex/cyclosome (APC/C). Regulates cell proliferation during early development by targeting CYCA2-3 for APC/C-mediated degradation. Required for mitosis I during pollen microspore development. This is Protein SAMBA from Arabidopsis thaliana (Mouse-ear cress).